The sequence spans 179 residues: Adaptation to cold protein A (179 aa).

The tract at residues 133-179 (KATPAPKRSADDDFEDEDSDYADYSDDDDDEGEEEDGYYDHYDDEDR) is disordered. Over residues 144-179 (DDFEDEDSDYADYSDDDDDEGEEEDGYYDHYDDEDR) the composition is skewed to acidic residues.

Functionally, part of an operon involved in cold adaptation. The sequence is that of Adaptation to cold protein A from Shewanella oneidensis (strain ATCC 700550 / JCM 31522 / CIP 106686 / LMG 19005 / NCIMB 14063 / MR-1).